The chain runs to 305 residues: MEFKQLPPLAAWPRLLSQNTLRWQKPISEGLTLLLLVASAWTLGKMVWVVSAEQTPVPTWSPTLSGLKAERQPLDISVLQKGELFGVFTEPKEAPVVEQPVVVDAPKTRLSLVLSGVVASNDAQKSLAVIANRGVQATYGINEVIEGTQAKLKAVMPDRVIISNSGRDETLMLEGLDYTAPATASVSNPPRPRPNQPNAVPQFEDKVDAIREAIARNPQEIFQYVRLSQVKRDDKVLGYRVSPGKDPVLFESIGLQDGDMAVALNGLDLTDPNVMNTLFQSMNEMTEMSLTVERDGQQHDVYIQF.

The Cytoplasmic portion of the chain corresponds to 1–29 (MEFKQLPPLAAWPRLLSQNTLRWQKPISE). Residues 30–50 (GLTLLLLVASAWTLGKMVWVV) traverse the membrane as a helical segment. Over 51 to 305 (SAEQTPVPTW…GQQHDVYIQF (255 aa)) the chain is Periplasmic.

The protein belongs to the GSP C family.

The protein resides in the cell inner membrane. Functionally, involved in a type II secretion system (T2SS, formerly general secretion pathway, GSP) for the export of proteins. Required for secretion of cholera toxin through the outer membrane. The polypeptide is Type II secretion system protein C (epsC) (Vibrio cholerae serotype O1 (strain ATCC 39315 / El Tor Inaba N16961)).